Here is a 219-residue protein sequence, read N- to C-terminus: Octanoyltransferase (219 aa).

The region spanning 31–206 (DEDVDQIWLV…ELVELLGYDQ (176 aa)) is the BPL/LPL catalytic domain. Substrate contacts are provided by residues 70–77 (RGGQVTYH), 137–139 (SLG), and 150–152 (GLA). Cys168 functions as the Acyl-thioester intermediate in the catalytic mechanism.

It belongs to the LipB family.

The protein localises to the cytoplasm. It carries out the reaction octanoyl-[ACP] + L-lysyl-[protein] = N(6)-octanoyl-L-lysyl-[protein] + holo-[ACP] + H(+). It participates in protein modification; protein lipoylation via endogenous pathway; protein N(6)-(lipoyl)lysine from octanoyl-[acyl-carrier-protein]: step 1/2. Functionally, catalyzes the transfer of endogenously produced octanoic acid from octanoyl-acyl-carrier-protein onto the lipoyl domains of lipoate-dependent enzymes. Lipoyl-ACP can also act as a substrate although octanoyl-ACP is likely to be the physiological substrate. The protein is Octanoyltransferase of Vibrio atlanticus (strain LGP32) (Vibrio splendidus (strain Mel32)).